A 217-amino-acid chain; its full sequence is Small ribosomal subunit protein uS3 (217 aa).

Positions 40–110 (IRDLINKWFN…EVYINIHEVR (71 aa)) constitute a KH type-2 domain.

Belongs to the universal ribosomal protein uS3 family. In terms of assembly, part of the 30S ribosomal subunit. Forms a tight complex with proteins S10 and S14.

Functionally, binds the lower part of the 30S subunit head. Binds mRNA in the 70S ribosome, positioning it for translation. This chain is Small ribosomal subunit protein uS3, found in Rickettsia prowazekii (strain Madrid E).